A 388-amino-acid chain; its full sequence is Envelope protein F13 homolog (388 aa).

A lipid anchor (N-myristoyl glycine; by host) is attached at Gly2. One can recognise a PLD phosphodiesterase domain in the interval 310 to 337 (GDAINNTKLLVVDDEYVHVSNADIDGTH).

It is found in the virion membrane. The protein localises to the host endoplasmic reticulum membrane. In terms of biological role, envelope protein associated with the inner side of the enveloped virion (EV) membrane. This Molluscum contagiosum virus subtype 2 (MOCV) protein is Envelope protein F13 homolog (P43K).